A 359-amino-acid chain; its full sequence is Membrane-bound lytic murein transglycosylase C (359 aa).

A signal peptide spans 1 to 16 (MKKYLALALIAPLLIS). A lipid anchor (N-palmitoyl cysteine) is attached at Cys-17. Cys-17 is lipidated: S-diacylglycerol cysteine.

Belongs to the transglycosylase Slt family.

The protein localises to the cell outer membrane. The enzyme catalyses Exolytic cleavage of the (1-&gt;4)-beta-glycosidic linkage between N-acetylmuramic acid (MurNAc) and N-acetylglucosamine (GlcNAc) residues in peptidoglycan, from either the reducing or the non-reducing ends of the peptidoglycan chains, with concomitant formation of a 1,6-anhydrobond in the MurNAc residue.. Murein-degrading enzyme. May play a role in recycling of muropeptides during cell elongation and/or cell division. The polypeptide is Membrane-bound lytic murein transglycosylase C (Shigella sonnei (strain Ss046)).